A 1003-amino-acid polypeptide reads, in one-letter code: NACHT, LRR and PYD domains-containing protein 9B (1003 aa).

Residues 1–91 (MAGSSGYGLL…SIMAQKKKRH (91 aa)) enclose the Pyrin domain. Residues 143–465 (VTAIVAGTTG…QDKDICVPVI (323 aa)) enclose the NACHT domain. 149–156 (GTTGEGKT) is an ATP binding site. LRR repeat units lie at residues 749 to 770 (KVKHLSLVENPLKNKGVMSLCE), 778 to 799 (VLQSLMLSYCCLTFIACGHLYE), 806 to 826 (HLSLLDLGSNFLEDTGVNLLC), 835 to 856 (TLKELWLPGCFLTSQCCEEISA), 863 to 883 (NLKTLKLGNNNIQDTGVRQLC), 892 to 913 (NLECLGLDLCEFTSDCCKDLAL), and 920 to 940 (TLNSLNLDWKTLDHSGLVVLC).

Sensor component of NLRP9 inflammasomes. Inflammasomes are supramolecular complexes that assemble in the cytosol in response to pathogens, such as rotavirus, but not encephalomyocarditis virus (EMCV), and play critical roles in innate immunity and inflammation. The core of NLRP9 inflammasomes consists of a signal sensor component (NLRP9), an adapter (ASC/PYCARD), which recruits an effector pro-inflammatory caspase (CASP1). Within the complex, NLRP9 and PYCARD interact via their respective DAPIN/pyrin domains. This interaction initiates speck formation (nucleation) which greatly enhances further addition of soluble PYCARD molecules to the speck in a prion-like polymerization process. Clustered PYCARD nucleates the formation of CASP1 filaments through the interaction of their respective CARD domains, acting as a platform for CASP1 polymerization. CASP1 filament formation increases local enzyme concentration, resulting in trans-autocleavage and activation. Active CASP1 then processes IL1B and IL18 precursors, leading to the release of mature cytokines in the extracellular milieu and inflammatory response. Interacts with DHX9 upon rotavirus infection; this interaction may trigger inflammasome activation and inflammatory response. In terms of tissue distribution, predominantly expressed in the intestine, including proximal and distal colon, cecum, ileum, jejunum and duodenum (at protein level). In the ileum, expressed in epithelial cells. Also expressed in oocytes at all follicular stages and in preimplantation embryos (at protein level). Although expression decreases in preimplantation embryos, it is still detectable in blastocyts.

It is found in the cytoplasm. The protein localises to the inflammasome. Its function is as follows. As the sensor component of the NLRP9 inflammasome, plays a crucial role in innate immunity and inflammation. In response to pathogens, including rotavirus, initiates the formation of the inflammasome polymeric complex, made of NLRP9, PYCARD and CASP1. Recruitment of proCASP1 to the inflammasome promotes its activation and CASP1-catalyzed IL1B and IL18 maturation and release in the extracellular milieu. The active cytokines stimulate inflammatory responses. Inflammasomes can also induce pyroptosis, an inflammatory form of programmed cell death. NLRP9 inflammasome activation may be initiated by DHX9 interaction with viral double-stranded RNA (dsRNA), preferentially to short dsRNA segments. The protein is NACHT, LRR and PYD domains-containing protein 9B (Nlrp9b) of Mus musculus (Mouse).